Consider the following 944-residue polypeptide: Nonsense-mediated mRNA decay factor SMG8 (944 aa).

2 disordered regions span residues 559–601 (LNNG…SNCC) and 629–654 (ASSE…TDNE). Residues 568-589 (QDEDAEEDEAEEEEGQEQEQPT) are compositionally biased toward acidic residues. The span at 629–640 (ASSEQLLNSEQN) shows a compositional bias: polar residues. Residues 641–650 (TTSSGTSSAD) are compositionally biased toward low complexity.

It belongs to the SMG8 family.

In terms of biological role, involved in nonsense-mediated decay (NMD) of mRNAs containing premature stop codons. Probable component of kinase complex containing nonC and recruited to stalled ribosomes. In Drosophila melanogaster (Fruit fly), this protein is Nonsense-mediated mRNA decay factor SMG8.